A 506-amino-acid chain; its full sequence is MGTYPAFSGSPQLPEQRLHGTTNLNPAGGYRIELQIQDATFDKYPAKQHAQRVAAKIKKGKGLIFLMGQKAALLEDSDQETRFRQRRYFFYMSGVNEADCDLTYDIQSDKLTLYVPNFDLGREIWMGPTLGPQDALKRYDIDEAKYQSFLQGDIKQWASCSGHGSTIYTLHDSQKPTGDFPNVFMDSETLKPAMDACRVIKDEHEIEQMRHANRVSTAAHIAVLQGICKMTNEAQIEGSFLNTCVSLGAHNQAYGIIAASGANAATLHYSKNNEPLKGRQFVCLDAGAEWNCHASDVTRTFPLTARWPGTEAEQIYALVQNMQESCILRIKEGVRYLDLHHLAHDILIHGFLAIGIFKAGTADEIKKSGASSLFFPHGLGHHIGLEVHDVSPDSIFAQDNDGTTDSWLFSSTYLSPCTASSPTLKSGMVVTVEPGIYFSQIALDNAKPAQLKHIDMDVVKRYMAVGGVRIEDDILVTKDGFENLTSAPKGQAMLDYIQQGNGSCDI.

Residues Asp285, Asp296, Glu433, and Glu471 each contribute to the Mn(2+) site.

This sequence belongs to the peptidase M24B family. Mn(2+) serves as cofactor.

The catalysed reaction is Release of any N-terminal amino acid, including proline, that is linked to proline, even from a dipeptide or tripeptide.. In terms of biological role, catalyzes the removal of a penultimate prolyl residue from the N-termini of peptides. In Paracoccidioides brasiliensis (strain Pb18), this protein is Probable Xaa-Pro aminopeptidase PADG_06815.